Consider the following 130-residue polypeptide: Small ribosomal subunit protein uS8 (130 aa).

It belongs to the universal ribosomal protein uS8 family. As to quaternary structure, part of the 30S ribosomal subunit.

Functionally, one of the primary rRNA binding proteins, it binds directly to 16S rRNA central domain where it helps coordinate assembly of the platform of the 30S subunit. The polypeptide is Small ribosomal subunit protein uS8 (Pyrococcus horikoshii (strain ATCC 700860 / DSM 12428 / JCM 9974 / NBRC 100139 / OT-3)).